Reading from the N-terminus, the 122-residue chain is Sterile alpha motif domain-containing protein 13 (122 aa).

The SAM domain occupies 51–119; it reads WAVMDVVNYF…KPLQTKHLKN (69 aa).

The protein is Sterile alpha motif domain-containing protein 13 (SAMD13) of Homo sapiens (Human).